Reading from the N-terminus, the 353-residue chain is tRNA-specific 2-thiouridylase MnmA (353 aa).

ATP contacts are provided by residues 6–13 (GMSGGVDS) and L32. C99 serves as the catalytic Nucleophile. A disulfide bond links C99 and C197. G124 serves as a coordination point for ATP. Residues 147 to 149 (KDQ) are interaction with tRNA. Catalysis depends on C197, which acts as the Cysteine persulfide intermediate. The interaction with tRNA stretch occupies residues 303–304 (RY).

Belongs to the MnmA/TRMU family.

The protein localises to the cytoplasm. The catalysed reaction is S-sulfanyl-L-cysteinyl-[protein] + uridine(34) in tRNA + AH2 + ATP = 2-thiouridine(34) in tRNA + L-cysteinyl-[protein] + A + AMP + diphosphate + H(+). In terms of biological role, catalyzes the 2-thiolation of uridine at the wobble position (U34) of tRNA, leading to the formation of s(2)U34. The polypeptide is tRNA-specific 2-thiouridylase MnmA (Persephonella marina (strain DSM 14350 / EX-H1)).